Here is a 1413-residue protein sequence, read N- to C-terminus: Leucine-rich repeat receptor protein kinase MSL1 (1413 aa).

A signal peptide spans 1–23 (MAPMLSIASRSPSPALIAPHASA). N-linked (GlcNAc...) asparagine glycans are attached at residues Asn153 and Asn192. LRR repeat units lie at residues 185-209 (FQSLVRLNVSGCGFSGELPEAMVNL), 210-233 (QHLQHLDLSDNQLGGPLPASLFDL), 235-257 (MLKVMVLDNNMFSGQLSPAIAHL), 258-281 (QQLTVLSISTNSFSGGLPPELGSL), 282-304 (KNLEYLDIHTNAFSGSIPASFSN), 306-329 (SRLLYLDANNNNLTGSIFPGIRAL), 330-353 (VNLVKLDLSSNGLVGAIPKELCQL), 354-377 (KNLQSLILSDNELTGSIPEEIGNL), 379-401 (QLEVLNLLKCNLMDTVPLSIGNL), 402-425 (EILEGLYISFNSFSGELPASVGEL), 427-449 (NLRQLMAKSAGFTGSIPKELGNC), 450-473 (KKLTTLVLSGNNFTGTIPEELADL), 475-497 (AVVLFDVEGNRLSGHIPDWIQNW), 498-518 (SNVSSISLAQNMFDGPLPGLP), 519-542 (LHLVSFSAESNRLSGSIPAKICQG), 543-565 (TFLQILRLNDNNLTGSIDETFKG), 567-589 (KNLTELSLLDNHLHGEIPEYLAL), 590-613 (LPLVSLDLSHNNFTGMIPDRLWES), 615-636 (TILDISLSDNQLTGMITESIGK), 637-661 (LLSLQSLSIDRNYLQGPLPRSIGAL), 662-685 (RNLTALSLSGNMLSEDIPIQLFNC), 687-709 (NLVTLDLSCNNLTGHIPKAISHL), 710-733 (TKLNTLVLSRNRLSGAIPSELCVA), 745-769 (VQHIGLIDLSRNRLTGHIPRAINNC), 771-793 (ILVELHLQDNLLSGTIPVELAEL), 794-817 (RNITTIDLSSNALVGPVLPWPVPL), 818-841 (ASLQGLLLSNNRLSGSIPSGIGNI), 843-866 (PQITMLDLSGNALTGTLPLDLLCK), and 868-890 (SLNHLDVSDNNISGQIPFSCHED). N-linked (GlcNAc...) asparagine glycosylation is found at Asn304 and Asn317. N-linked (GlcNAc...) asparagine glycans are attached at residues Asn461, Asn496, and Asn499. N-linked (GlcNAc...) asparagine glycans are attached at residues Asn554, Asn568, and Asn601. N-linked (GlcNAc...) asparagine glycosylation is found at Asn663 and Asn697. Asn768 is a glycosylation site (N-linked (GlcNAc...) asparagine). The N-linked (GlcNAc...) asparagine glycan is linked to Asn795. 4 N-linked (GlcNAc...) asparagine glycosylation sites follow: Asn878, Asn901, Asn917, and Asn928. LRR repeat units follow at residues 918 to 942 (FTKLTYLDLHNNSLTGRLPSAIARV) and 944 to 966 (SLYYLDLSSNDFSGTIPCGICGM). Residue Asn973 is glycosylated (N-linked (GlcNAc...) asparagine). Residues 1016–1036 (TICCIATAIVIVLVVILVVYL) traverse the membrane as a helical segment. The Protein kinase domain maps to 1107 to 1401 (FDGMHVVGDG…IEAMEYGPLV (295 aa)). ATP-binding positions include 1113–1121 (VGDGGFGTV) and Lys1135. The Proton acceptor role is filled by Asp1234.

The protein belongs to the protein kinase superfamily. Ser/Thr protein kinase family. As to expression, expressed in roots, leaves, shoots and spikelets.

The protein resides in the cell membrane. It catalyses the reaction L-seryl-[protein] + ATP = O-phospho-L-seryl-[protein] + ADP + H(+). The enzyme catalyses L-threonyl-[protein] + ATP = O-phospho-L-threonyl-[protein] + ADP + H(+). In terms of biological role, receptor-like kinase that may play a role male and female sporogenesis. This chain is Leucine-rich repeat receptor protein kinase MSL1, found in Oryza sativa subsp. japonica (Rice).